Consider the following 365-residue polypeptide: Alanine racemase (365 aa).

The Proton acceptor; specific for D-alanine role is filled by lysine 36. Lysine 36 bears the N6-(pyridoxal phosphate)lysine mark. Arginine 132 is a substrate binding site. The active-site Proton acceptor; specific for L-alanine is tyrosine 257. Position 305 (methionine 305) interacts with substrate.

It belongs to the alanine racemase family. It depends on pyridoxal 5'-phosphate as a cofactor.

The enzyme catalyses L-alanine = D-alanine. Its pathway is amino-acid biosynthesis; D-alanine biosynthesis; D-alanine from L-alanine: step 1/1. Catalyzes the interconversion of L-alanine and D-alanine. May also act on other amino acids. This Xylella fastidiosa (strain Temecula1 / ATCC 700964) protein is Alanine racemase (alr).